Reading from the N-terminus, the 201-residue chain is MAKRVTGPEIEKLIQLLAKVPGLGPRSARRAALHLIKKKDQLLGPLSNAMGEAYDKVKICSRCGNVDTVDPCTVCTDAQRDQSVIIVVEDVSDLWALERAGAMNAAYHVLGGTLSPLDGIGPDDLNIRGLIDRIGEGGIRELIIAVNATVEGQTTAHYITDQLQGLDVKITRLAHGVPVGGELDYLDEGTLAAALRARTVI.

The segment at 60–75 (CSRCGNVDTVDPCTVC) adopts a C4-type zinc-finger fold. Positions 83-178 (SVIIVVEDVS…KITRLAHGVP (96 aa)) constitute a Toprim domain.

The protein belongs to the RecR family.

Functionally, may play a role in DNA repair. It seems to be involved in an RecBC-independent recombinational process of DNA repair. It may act with RecF and RecO. The polypeptide is Recombination protein RecR (Rhizobium etli (strain CIAT 652)).